The sequence spans 216 residues: Glutathione S-transferase D5 (216 aa).

Residues 1-80 (MDFYYSPRGS…YLVEKYGKDD (80 aa)) form the GST N-terminal domain. Glutathione is bound by residues 50-52 (HTI) and 64-66 (ESR). One can recognise a GST C-terminal domain in the interval 86–207 (DPKKQALVNQ…KGAVELKGVF (122 aa)).

Belongs to the GST superfamily. Delta family. In terms of assembly, homodimer.

The enzyme catalyses RX + glutathione = an S-substituted glutathione + a halide anion + H(+). In terms of biological role, conjugation of reduced glutathione to a wide number of exogenous and endogenous hydrophobic electrophiles. May be involved in detoxification. This is Glutathione S-transferase D5 from Drosophila melanogaster (Fruit fly).